The following is a 196-amino-acid chain: RNA pyrophosphohydrolase (196 aa).

Positions 6-149 (GYRPNVGIVI…KRDVYRKVMK (144 aa)) constitute a Nudix hydrolase domain. The short motif at 38–59 (GGINDNESAEQAMYRELHEEVG) is the Nudix box element. The tract at residues 166–196 (SREANSQSNSANKKYSQTKYTKRHFYKSKGQ) is disordered. Residues 167–184 (REANSQSNSANKKYSQTK) are compositionally biased toward polar residues. Over residues 185–196 (YTKRHFYKSKGQ) the composition is skewed to basic residues.

Belongs to the Nudix hydrolase family. RppH subfamily. The cofactor is a divalent metal cation.

Its function is as follows. Accelerates the degradation of transcripts by removing pyrophosphate from the 5'-end of triphosphorylated RNA, leading to a more labile monophosphorylated state that can stimulate subsequent ribonuclease cleavage. The polypeptide is RNA pyrophosphohydrolase (Haemophilus influenzae (strain 86-028NP)).